The chain runs to 339 residues: Anthranilate phosphoribosyltransferase (339 aa).

5-phospho-alpha-D-ribose 1-diphosphate is bound by residues Gly-82, 85–86 (GD), 92–95 (NIST), 110–118 (KHGNSSISS), and Ser-122. Position 82 (Gly-82) interacts with anthranilate. Position 94 (Ser-94) interacts with Mg(2+). Asn-113 is a binding site for anthranilate. An anthranilate-binding site is contributed by Arg-168. 2 residues coordinate Mg(2+): Asp-227 and Glu-228.

This sequence belongs to the anthranilate phosphoribosyltransferase family. Homodimer. Requires Mg(2+) as cofactor.

It catalyses the reaction N-(5-phospho-beta-D-ribosyl)anthranilate + diphosphate = 5-phospho-alpha-D-ribose 1-diphosphate + anthranilate. The protein operates within amino-acid biosynthesis; L-tryptophan biosynthesis; L-tryptophan from chorismate: step 2/5. Catalyzes the transfer of the phosphoribosyl group of 5-phosphorylribose-1-pyrophosphate (PRPP) to anthranilate to yield N-(5'-phosphoribosyl)-anthranilate (PRA). The sequence is that of Anthranilate phosphoribosyltransferase from Ruthia magnifica subsp. Calyptogena magnifica.